A 158-amino-acid polypeptide reads, in one-letter code: Crossover junction endodeoxyribonuclease RuvC (158 aa).

Catalysis depends on residues D7, E67, and D139. Residues D7, E67, and D139 each coordinate Mg(2+).

It belongs to the RuvC family. Homodimer which binds Holliday junction (HJ) DNA. The HJ becomes 2-fold symmetrical on binding to RuvC with unstacked arms; it has a different conformation from HJ DNA in complex with RuvA. In the full resolvosome a probable DNA-RuvA(4)-RuvB(12)-RuvC(2) complex forms which resolves the HJ. Mg(2+) serves as cofactor.

The protein resides in the cytoplasm. The enzyme catalyses Endonucleolytic cleavage at a junction such as a reciprocal single-stranded crossover between two homologous DNA duplexes (Holliday junction).. In terms of biological role, the RuvA-RuvB-RuvC complex processes Holliday junction (HJ) DNA during genetic recombination and DNA repair. Endonuclease that resolves HJ intermediates. Cleaves cruciform DNA by making single-stranded nicks across the HJ at symmetrical positions within the homologous arms, yielding a 5'-phosphate and a 3'-hydroxyl group; requires a central core of homology in the junction. The consensus cleavage sequence is 5'-(A/T)TT(C/G)-3'. Cleavage occurs on the 3'-side of the TT dinucleotide at the point of strand exchange. HJ branch migration catalyzed by RuvA-RuvB allows RuvC to scan DNA until it finds its consensus sequence, where it cleaves and resolves the cruciform DNA. The sequence is that of Crossover junction endodeoxyribonuclease RuvC from Prochlorococcus marinus (strain MIT 9211).